The sequence spans 73 residues: Small ribosomal subunit protein bS18 (73 aa).

It belongs to the bacterial ribosomal protein bS18 family. Part of the 30S ribosomal subunit. Forms a tight heterodimer with protein bS6.

Its function is as follows. Binds as a heterodimer with protein bS6 to the central domain of the 16S rRNA, where it helps stabilize the platform of the 30S subunit. The sequence is that of Small ribosomal subunit protein bS18 from Coxiella burnetii (strain Dugway 5J108-111).